The following is a 232-amino-acid chain: Large ribosomal subunit protein uL1 (232 aa).

This sequence belongs to the universal ribosomal protein uL1 family. In terms of assembly, part of the 50S ribosomal subunit.

Binds directly to 23S rRNA. The L1 stalk is quite mobile in the ribosome, and is involved in E site tRNA release. In terms of biological role, protein L1 is also a translational repressor protein, it controls the translation of the L11 operon by binding to its mRNA. This chain is Large ribosomal subunit protein uL1, found in Levilactobacillus brevis (strain ATCC 367 / BCRC 12310 / CIP 105137 / JCM 1170 / LMG 11437 / NCIMB 947 / NCTC 947) (Lactobacillus brevis).